Reading from the N-terminus, the 186-residue chain is MISSNDFRTGTTIELDGAVWRVIEFLHVKPGKGSAFVRTKLKAVQSGSVVEKTFRAGEMVPQALLEKTTLQHTYMDSGDYVFMDMSSYEETRLTAAQIGESRKYLTEGMEVNVVSWNERPLEVELPNSVVLTVKETDPGVKGDTATGGTKPAILETGAQVMVPLFISVGEKIKVDTRNDSYLGREN.

This sequence belongs to the elongation factor P family.

It is found in the cytoplasm. The protein operates within protein biosynthesis; polypeptide chain elongation. Involved in peptide bond synthesis. Stimulates efficient translation and peptide-bond synthesis on native or reconstituted 70S ribosomes in vitro. Probably functions indirectly by altering the affinity of the ribosome for aminoacyl-tRNA, thus increasing their reactivity as acceptors for peptidyl transferase. The chain is Elongation factor P from Prochlorococcus marinus (strain MIT 9211).